The chain runs to 184 residues: Probable RNA 2'-phosphotransferase (184 aa).

The protein belongs to the KptA/TPT1 family.

Its function is as follows. Removes the 2'-phosphate from RNA via an intermediate in which the phosphate is ADP-ribosylated by NAD followed by a presumed transesterification to release the RNA and generate ADP-ribose 1''-2''-cyclic phosphate (APPR&gt;P). May function as an ADP-ribosylase. This is Probable RNA 2'-phosphotransferase from Burkholderia pseudomallei (strain K96243).